Consider the following 234-residue polypeptide: Thymidine kinase, cytosolic (234 aa).

The residue at position 13 (S13) is a Phosphoserine. Residues 26–33 (GPMFSGKS), 58–60 (DTR), and 97–100 (DEGQ) contribute to the ATP site. E98 (proton acceptor) is an active-site residue. Residue F128 coordinates substrate. 2 residues coordinate Zn(2+): C153 and C156. Substrate-binding positions include 172–176 (VEVIG) and Y181. 2 residues coordinate Zn(2+): C185 and C188. A KEN box motif is present at residues 203-205 (KEN).

It belongs to the thymidine kinase family. Homotetramer. Tetramerization from dimerization is induced by ATP and increases catalytic efficiency due to a high affinity for thymidine. Tetramerization is inhibited by phosphorylation at Ser-13. Interacts (via the KEN box) with FZR1. Post-translationally, phosphorylated on Ser-13 in mitosis. Phosphorylation of Ser-13 by CDK1 during mitosis reduces homotetramerization and catalytic efficiency when DNA replication is complete and intracellular TK1 is still present at a high level. In terms of processing, polyubiquitinated. Postmitosis, ubiquitination leads to proteasomal degradation. The KEN box sequence located at the C-terminal region targets for degradation by the anaphase promoting complex (APC/C) activated and rate-limited by FZR1.

The protein localises to the cytoplasm. The catalysed reaction is thymidine + ATP = dTMP + ADP + H(+). In terms of biological role, cell-cycle-regulated enzyme of importance in nucleotide metabolism. Catalyzes the first enzymatic step in the salvage pathway converting thymidine into thymidine monophosphate. Transcriptional regulation limits expression to the S phase of the cell cycle and transient expression coincides with the oscillation in the intracellular dTTP concentration. This is Thymidine kinase, cytosolic (TK1) from Cricetulus griseus (Chinese hamster).